Here is a 266-residue protein sequence, read N- to C-terminus: MKKLTQAFLRFCLRFLQLLSLVLVLPVFVLMLISSLISAKNYESIPENYPPEIRFKKVYRLVSLFLYIKGVKVVIVNPENVPKKAVLVVANHKSNLDPLILIKAFGKTEGVPPLTFIAKIELQDTWLFKIMKLIDCVFIDRKNLRQMAASLEQQQQIIRQGTALCVFPEGTRVLSRQIGEFKSGALKVAYNAFVPIVPLTIVGSMGHMESKKRLQKAQVERDRGYKIQVIFNTPINPINFNQIDSQNVANNVWREISQTYAQYCQD.

An HXXXXD motif motif is present at residues 92-97 (HKSNLD).

The protein belongs to the 1-acyl-sn-glycerol-3-phosphate acyltransferase family.

The enzyme catalyses a 1-acyl-sn-glycero-3-phosphate + an acyl-CoA = a 1,2-diacyl-sn-glycero-3-phosphate + CoA. It participates in phospholipid metabolism; CDP-diacylglycerol biosynthesis; CDP-diacylglycerol from sn-glycerol 3-phosphate: step 2/3. Converts lysophosphatidic acid (LPA) into phosphatidic acid by incorporating acyl moiety at the 2 position. The protein is Probable 1-acyl-sn-glycerol-3-phosphate acyltransferase (plsC) of Mycoplasma pneumoniae (strain ATCC 29342 / M129 / Subtype 1) (Mycoplasmoides pneumoniae).